The sequence spans 202 residues: Cryptic protein (202 aa).

The N-terminal stretch at 1–35 is a signal peptide; the sequence is MRANSPTQGISLKMHQARPLFLVTVALQLIGLGYS. Asparagine 65 carries N-linked (GlcNAc...) asparagine glycosylation. Residues 94 to 123 enclose the EGF-like domain; the sequence is PVSRCCHNGGTCVLGSFCVCPAYFTGRYCE. Disulfide bonds link cysteine 98/cysteine 105, cysteine 99/cysteine 111, and cysteine 113/cysteine 122. Residue aspartate 166 is the site of GPI-anchor amidated aspartate attachment. Positions 167–202 are cleaved as a propeptide — removed in mature form; the sequence is LKSFLSSGARGSRECSIPSLLLLVLCLLLQGVAGKG.

This sequence belongs to the EGF-CFC (Cripto-1/FRL1/Cryptic) family. N-glycosylated. No expressed in adult tissues.

Its subcellular location is the cell membrane. The protein resides in the secreted. In terms of biological role, nodal coreceptor involved in the correct establishment of the left-right axis. May play a role in mesoderm and/or neural patterning during gastrulation. This Mus musculus (Mouse) protein is Cryptic protein (Cfc1).